The sequence spans 77 residues: Sec-independent protein translocase protein TatA 2 (77 aa).

Residues 2–22 (FPGGISMTELIIILAVILLLF) form a helical membrane-spanning segment. The interval 52–77 (KEVKAEDVKTEERKEEKKEEKEKVEA) is disordered.

Belongs to the TatA/E family. As to quaternary structure, forms a complex with TatC.

The protein resides in the cell inner membrane. Its function is as follows. Part of the twin-arginine translocation (Tat) system that transports large folded proteins containing a characteristic twin-arginine motif in their signal peptide across membranes. TatA could form the protein-conducting channel of the Tat system. The polypeptide is Sec-independent protein translocase protein TatA 2 (Aquifex aeolicus (strain VF5)).